A 402-amino-acid chain; its full sequence is UDP-N-acetylmuramoylalanine--D-glutamate ligase (402 aa).

97–103 (GTNGKTT) serves as a coordination point for ATP.

It belongs to the MurCDEF family.

Its subcellular location is the cytoplasm. It catalyses the reaction UDP-N-acetyl-alpha-D-muramoyl-L-alanine + D-glutamate + ATP = UDP-N-acetyl-alpha-D-muramoyl-L-alanyl-D-glutamate + ADP + phosphate + H(+). It functions in the pathway cell wall biogenesis; peptidoglycan biosynthesis. Its function is as follows. Cell wall formation. Catalyzes the addition of glutamate to the nucleotide precursor UDP-N-acetylmuramoyl-L-alanine (UMA). The polypeptide is UDP-N-acetylmuramoylalanine--D-glutamate ligase (Campylobacter jejuni (strain RM1221)).